The following is a 569-amino-acid chain: Tetratricopeptide repeat protein 22 (569 aa).

7 TPR repeats span residues 66 to 99 (PAVR…HPGN), 101 to 133 (NAWA…MGLA), 203 to 237 (ATLY…LRQV), 260 to 294 (KDTF…AKNQ), 295 to 328 (PPIL…LRDP), 383 to 418 (FKAY…ALVF), and 432 to 465 (PELQ…DDAG).

The protein is Tetratricopeptide repeat protein 22 (TTC22) of Homo sapiens (Human).